Reading from the N-terminus, the 234-residue chain is Peptidase E (234 aa).

Catalysis depends on charge relay system residues serine 123, aspartate 138, and histidine 160.

It belongs to the peptidase S51 family.

It localises to the cytoplasm. It catalyses the reaction Dipeptidase E catalyzes the hydrolysis of dipeptides Asp-|-Xaa. It does not act on peptides with N-terminal Glu, Asn or Gln, nor does it cleave isoaspartyl peptides.. In terms of biological role, hydrolyzes dipeptides containing N-terminal aspartate residues. May play a role in allowing the cell to use peptide aspartate to spare carbon otherwise required for the synthesis of the aspartate family of amino acids. The protein is Peptidase E of Haemophilus influenzae (strain PittGG).